Here is a 23-residue protein sequence, read N- to C-terminus: Large ribosomal subunit protein uL10 (23 aa).

It belongs to the universal ribosomal protein uL10 family. In terms of assembly, part of the ribosomal stalk of the 50S ribosomal subunit. The N-terminus interacts with L11 and the large rRNA to form the base of the stalk. The C-terminus forms an elongated spine to which L12 dimers bind in a sequential fashion forming a multimeric L10(L12)X complex.

Forms part of the ribosomal stalk, playing a central role in the interaction of the ribosome with GTP-bound translation factors. In Klebsiella pneumoniae, this protein is Large ribosomal subunit protein uL10 (rplJ).